We begin with the raw amino-acid sequence, 546 residues long: Fusion glycoprotein F0 (546 aa).

An N-terminal signal peptide occupies residues 1-19 (MGILFAALLAMTNPHLATG). Topologically, residues 20–491 (QIHWGNLSKI…NIKGVSVTNT (472 aa)) are extracellular. 3 N-linked (GlcNAc...) asparagine; by host glycosylation sites follow: N25, N57, and N63. The interval 109 to 133 (FAGVVLAGAALGVATAAQITAGIAL) is fusion peptide. Residues 134–162 (HQSMMNSQAIESLKASLETTNQAIEEIRQ) are a coiled coil. Disulfide bonds link C330-C339, C354-C362, C386-C391, and C393-C416. The stretch at 458 to 483 (NLWNAVTKLEKAKDLLDSSDLILENI) forms a coiled coil. A helical membrane pass occupies residues 492 to 512 (GYILVGVGLIAVVGILIITCC). Residues 513–546 (CKKRRTDNKVSTMVLNPGLRPDLTGTSKSYVRSL) lie on the Cytoplasmic side of the membrane.

It belongs to the paramyxoviruses fusion glycoprotein family. In terms of assembly, homotrimer of disulfide-linked F1-F2. Post-translationally, the inactive precursor F0 is glycosylated and proteolytically cleaved into F1 and F2 to be functionally active. The cleavage is mediated by cellular proteases during the transport and maturation of the polypeptide.

It is found in the virion membrane. The protein resides in the host cell membrane. Functionally, class I viral fusion protein. Under the current model, the protein has at least 3 conformational states: pre-fusion native state, pre-hairpin intermediate state, and post-fusion hairpin state. During viral and plasma cell membrane fusion, the heptad repeat (HR) regions assume a trimer-of-hairpins structure, positioning the fusion peptide in close proximity to the C-terminal region of the ectodomain. The formation of this structure appears to drive apposition and subsequent fusion of viral and plasma cell membranes. Directs fusion of viral and cellular membranes leading to delivery of the nucleocapsid into the cytoplasm. This fusion is pH independent and occurs directly at the outer cell membrane. The trimer of F1-F2 (F protein) probably interacts with HN at the virion surface. Upon HN binding to its cellular receptor, the hydrophobic fusion peptide is unmasked and interacts with the cellular membrane, inducing the fusion between cell and virion membranes. Later in infection, F proteins expressed at the plasma membrane of infected cells could mediate fusion with adjacent cells to form syncytia, a cytopathic effect that could lead to tissue necrosis. The chain is Fusion glycoprotein F0 (F) from Bos indicus (Zebu).